The chain runs to 1006 residues: Serine/threonine-protein phosphatase BSL3 (1006 aa).

Residues 1 to 67 (MDLDSSMVPE…QQQQQPQVTA (67 aa)) form a disordered region. Composition is skewed to low complexity over residues 38 to 47 (SESESASLTP) and 54 to 67 (QQQQ…QVTA). Kelch repeat units lie at residues 138–184 (TSAG…VATA), 242–290 (YLMA…TASA), 295–345 (LLLL…VFVN), 351–398 (SGGA…DAAG), and 419–465 (LIFI…TPPG). 2 disordered regions span residues 454–494 (AAAA…LGSP) and 552–579 (GEVE…IKPD). Serine 616 is modified (phosphoserine). Mn(2+) contacts are provided by aspartate 709, histidine 711, aspartate 743, and asparagine 775. Residue histidine 776 is the Proton donor of the active site. Residues histidine 828 and histidine 907 each contribute to the Mn(2+) site. The residue at position 964 (serine 964) is a Phosphoserine. The disordered stretch occupies residues 982–1006 (NVNRPPTPTRGRPQNPNDRGSLAWI).

Belongs to the PPP phosphatase family. BSU subfamily. It depends on Mn(2+) as a cofactor. In terms of tissue distribution, expressed throughout the plant, with a higher level in younger parts.

The protein localises to the nucleus. It catalyses the reaction O-phospho-L-seryl-[protein] + H2O = L-seryl-[protein] + phosphate. The enzyme catalyses O-phospho-L-threonyl-[protein] + H2O = L-threonyl-[protein] + phosphate. Its function is as follows. Phosphatase involved in elongation process, probably by acting as a regulator of brassinolide signaling. The protein is Serine/threonine-protein phosphatase BSL3 (BSL3) of Arabidopsis thaliana (Mouse-ear cress).